A 264-amino-acid polypeptide reads, in one-letter code: MNQVTESAVQFDVVSLFPEMFRALTDWGITSRAVKQGRFGLRTWNPRDFTTDNYRTVDDRPYGGGPGMVMLARPLEAAIDAAKAAQAEQGIASTRVVMMSPQGAPLTHDRAVRMAQEPGVVVLCGRYEAIDQRLLDRCVDEEISLGDFVLSGGELPAMAMMDAVVRLLPGVLNDSLSAVQDSFADGLLDCPHYTRPEEYDGVRVPDVLLGGHHAEIERWRRQEALRNTLRKRPDLIVRARREKLLSRADEAWLANLAREAKDAS.

S-adenosyl-L-methionine contacts are provided by residues Gly125 and 145–150 (LGDFVL).

The protein belongs to the RNA methyltransferase TrmD family. In terms of assembly, homodimer.

It localises to the cytoplasm. It carries out the reaction guanosine(37) in tRNA + S-adenosyl-L-methionine = N(1)-methylguanosine(37) in tRNA + S-adenosyl-L-homocysteine + H(+). Specifically methylates guanosine-37 in various tRNAs. This Burkholderia lata (strain ATCC 17760 / DSM 23089 / LMG 22485 / NCIMB 9086 / R18194 / 383) protein is tRNA (guanine-N(1)-)-methyltransferase.